The primary structure comprises 407 residues: Aurofusarin biosynthesis cluster protein S (407 aa).

The N-terminal stretch at 1 to 35 (MSKQKPSLWRALRALSFIISIPLLIQYLVLKWYST) is a signal peptide. Residues N52, N174, N196, N274, and N312 are each glycosylated (N-linked (GlcNAc...) asparagine). 2 consecutive FAS1 domains span residues 52 to 192 (NLTV…DTVL) and 195 to 365 (PNST…DSIL).

Might be part of an extracellular enzyme complex composed of GIP1, aurF, aurO and aurS.

It is found in the secreted. It localises to the extracellular space. It participates in pigment biosynthesis. Its function is as follows. Part of the gene cluster that mediates the biosynthesis of aurofusarin, a red mycelium pigment which is acting as a mycotoxin. The first step is performed by the polyketide synthase which condenses one acetyl-CoA and 6 malonyl-CoA units to form the first intermediate, the cyclic heptaketide and yellow pigment YWA1. The C2 hydroxyl group in the pyrone ring of YWA1 is probably formed during ring closure by an aldol-type cyclization reaction. The dehydratase aurZ then acts as the first tailoring enzyme in the aurofusarin biosynthetic pathway by converting YWA1 to nor-rubrofusarin. Nor-rubrofusarin is then methylated to rubrofusarin by the O-methyltransferase aurJ. Rubrofusarin is then transported across the plasma membrane by the rubrofusarin-specific pump aurT for further enzymatic processing by the extracellular complex composed of GIP1, aurF, aurO and aurS to yield aurofusarin. The polypeptide is Aurofusarin biosynthesis cluster protein S (Gibberella zeae (strain ATCC MYA-4620 / CBS 123657 / FGSC 9075 / NRRL 31084 / PH-1) (Wheat head blight fungus)).